A 750-amino-acid polypeptide reads, in one-letter code: GTP pyrophosphokinase rsh (750 aa).

The region spanning 45-144 (YFSHPLEVAA…VKLADRLHNM (100 aa)) is the HD domain. Residues 390 to 451 (DQVFCFTPKG…KNGDEVDIIR (62 aa)) enclose the TGS domain. The segment at 587–613 (AAKVDPAATTPKPGKRALPIRGTNPDL) is disordered. In terms of domain architecture, ACT spans 676-750 (RISVSAINSP…SVSSAKRVNG (75 aa)).

It belongs to the RelA/SpoT family.

It carries out the reaction GTP + ATP = guanosine 3'-diphosphate 5'-triphosphate + AMP. Functions as a (p)ppGpp synthase. In eubacteria ppGpp (guanosine 3'-diphosphate 5'-diphosphate) is a mediator of the stringent response that coordinates a variety of cellular activities in response to changes in nutritional abundance. Plays a role in adaptation of Brucella to its intracellular host environment. This chain is GTP pyrophosphokinase rsh (rsh), found in Brucella ovis (strain ATCC 25840 / 63/290 / NCTC 10512).